The chain runs to 255 residues: Type III pantothenate kinase (255 aa).

6-13 (DVGNTNIV) contributes to the ATP binding site. Substrate-binding positions include Tyr100 and 107–110 (GADR). The active-site Proton acceptor is Asp109. Asp129 contributes to the K(+) binding site. Position 132 (Thr132) interacts with ATP. Thr184 is a binding site for substrate.

It belongs to the type III pantothenate kinase family. As to quaternary structure, homodimer. Requires NH4(+) as cofactor. The cofactor is K(+).

The protein localises to the cytoplasm. It carries out the reaction (R)-pantothenate + ATP = (R)-4'-phosphopantothenate + ADP + H(+). It participates in cofactor biosynthesis; coenzyme A biosynthesis; CoA from (R)-pantothenate: step 1/5. In terms of biological role, catalyzes the phosphorylation of pantothenate (Pan), the first step in CoA biosynthesis. In Caldanaerobacter subterraneus subsp. tengcongensis (strain DSM 15242 / JCM 11007 / NBRC 100824 / MB4) (Thermoanaerobacter tengcongensis), this protein is Type III pantothenate kinase.